A 507-amino-acid chain; its full sequence is MAEEQARHVKNGLECIRALKAEPIGSLAVEEAMAAWSEISDNPGQDRATCKEEEAGSSGLSKPCLSAIGSTEGGAPRIRGQGSGESDDDAETLGIPSRNLQASSTGLQCYHVYDHSGEAVKGIQDADSIMVQSGLDGDSTLSGGDDESENSDVDIGEPDTEGYAITDRGSAPISMGFRASDVETAEGGEIHELLKLQSRGNNFPKLGKTLNVPPPPNPSRASTSETPIKKGTDARLASFGTEIASLLTGGATQCARKSPSEPSGPGAPAGNVPECVSNAALIQEWTPESGTTISPRSQNNEEGGDYYDDELFSDVQDIKTALAKIHEDNQKIISKLESLLLLKGEVESIKKQINRQNISISTLEGHLSSIMIAIPGLGKDPNDPTADVELNPDLKPIIGRDSGRALAEVLKKPVASRQLQGMTNGRTSSRGQLLKEFQLKPIGKKVSSAVGFVPDTGPASRSVIRSIIKSSRLEEDRKRYLMTLLDDIKGANDLAKFHQMLMKIIMK.

The interval 1–48 (MAEEQARHVKNGLECIRALKAEPIGSLAVEEAMAAWSEISDNPGQDRA) is interaction with N0. Disordered stretches follow at residues 40 to 92 (SDNP…DAET), 133 to 168 (SGLDGDSTLSGGDDESENSDVDIGEPDTEGYAITDR), 201 to 228 (NNFPKLGKTLNVPPPPNPSRASTSETPI), and 252 to 273 (TQCARKSPSEPSGPGAPAGNVP). S86 bears the Phosphoserine mark. Over residues 133-143 (SGLDGDSTLSG) the composition is skewed to low complexity. The span at 144 to 160 (GDDESENSDVDIGEPDT) shows a compositional bias: acidic residues. At S151 the chain carries Phosphoserine. A compositionally biased stretch (low complexity) spans 260–270 (SEPSGPGAPAG). Residues 304–376 (GDYYDDELFS…LSSIMIAIPG (73 aa)) form a multimerization region. 2 interaction with the L polymerase regions span residues 361 to 377 (STLEGHLSSIMIAIPGL) and 396 to 410 (PIIGRDSGRALAEVL). Residues 457–507 (GPASRSVIRSIIKSSRLEEDRKRYLMTLLDDIKGANDLAKFHQMLMKIIMK) form a x domain (XD) region. Positions 459–507 (ASRSVIRSIIKSSRLEEDRKRYLMTLLDDIKGANDLAKFHQMLMKIIMK) are interaction with the nucleocapsid (N-RNA).

The protein belongs to the morbillivirus P protein family. Homotetramer. Interacts (via multimerization domain and XD domain) with polymerase L; this interaction forms the polymerase L-P complex. Interacts (via N-terminus) with N0 (via Ncore); this interaction allows P to chaperon N0 to avoid N polymerization and non-specific RNA binding before encapsidation. Interacts (via C-terminus) with N-RNA template (via Ntail); this interaction maintains the P/L complex anchored to the nucleocapsid template during the sequential transcription. Interacts (via C-terminus) with protein C this interaction allows C to associate with the ribonucleocapsid. Phosphorylation on serines by host CK2 is necessary for the formation of viral factories.

Essential cofactor of the RNA polymerase L that plays a central role in the transcription and replication by forming the polymerase complex with RNA polymerase L and recruiting L to the genomic N-RNA template for RNA synthesis. Also plays a central role in the encapsidation of nascent RNA chains by forming the encapsidation complex with the nucleocapsid protein N (N-P complex). Acts as a chaperone for newly synthesized free N protein, so-called N0, allowing encapsidation of nascent RNA chains during replication. The nucleoprotein protein N prevents excessive phosphorylation of P, which leads to down-regulation of viral transcription/ replication. Participates, together with N, in the formation of viral factories (viroplasms), which are large inclusions in the host cytoplasm where replication takes place. The chain is Phosphoprotein (P/V) from Homo sapiens (Human).